Reading from the N-terminus, the 532-residue chain is Flavin-containing monooxygenase 1 (532 aa).

Residues 1-510 lie on the Lumenal side of the membrane; it reads MVKRVAIVGA…TRTIQESPSS (510 aa). FAD contacts are provided by residues 9–13, Glu32, 40–41, and 61–62; these read GAGVS, LW, and NS. Residues 60–61 and 195–198 each bind NADP(+); these read SN and SGTD. Residues 511-531 traverse the membrane as a helical segment; sequence FETLLKLFSFLALLIAVFLIF. Leu532 is a topological domain (cytoplasmic).

This sequence belongs to the FMO family. It depends on FAD as a cofactor. As to expression, liver.

It localises to the endoplasmic reticulum membrane. The catalysed reaction is hypotaurine + NADPH + O2 + H(+) = taurine + NADP(+) + H2O. It carries out the reaction hypotaurine + NADH + O2 + H(+) = taurine + NAD(+) + H2O. It catalyses the reaction trimethylamine + NADPH + O2 = trimethylamine N-oxide + NADP(+) + H2O. The enzyme catalyses N,N-dimethylaniline + NADPH + O2 + H(+) = N,N-dimethylaniline N-oxide + NADP(+) + H2O. In terms of biological role, broad spectrum monooxygenase that catalyzes the oxygenation of a wide variety of nitrogen- and sulfur-containing compounds including xenobiotics. Catalyzes the S-oxygenation of hypotaurine to produce taurine, an organic osmolyte involved in cell volume regulation as well as a variety of cytoprotective and developmental processes. In vitro, catalyzes the N-oxygenation of trimethylamine (TMA) to produce trimethylamine N-oxide (TMAO) and could therefore participate to the detoxification of this compound that is generated by the action of gut microbiota from dietary precursors such as choline, choline containing compounds, betaine or L-carnitine. The polypeptide is Flavin-containing monooxygenase 1 (Mus musculus (Mouse)).